The following is a 243-amino-acid chain: Protein canopy homolog 3 (243 aa).

Residues 1-15 form the signal peptide; it reads MWFLFLLLPLWAGCA. One can recognise a Saposin B-type domain in the interval 27–236; that stretch reads SKCEVCKYVA…KEEKKQMDQP (210 aa). Disulfide bonds link Cys29/Cys188, Cys32/Cys176, and Cys86/Cys148. Residues 136 to 160 are a coiled coil; sequence ETSAEVADMKKQCDVMMENYEEVIE. A disordered region spans residues 186 to 243; sequence QSCLSEQGDSRKGDTGPSTGTKKQKKQGEKKNKSKKQNSGSKEEKKQMDQPMAAKEEL. A compositionally biased stretch (basic and acidic residues) spans 226-243; the sequence is SKEEKKQMDQPMAAKEEL.

This sequence belongs to the canopy family.

The protein resides in the endoplasmic reticulum. In terms of biological role, toll-like receptor (TLR)-specific co-chaperone for HSP90B1. Required for proper TLR folding and hence controls TLR exit from the endoplasmic reticulum. Consequently, required for immune responses. The protein is Protein canopy homolog 3 (cnpy3) of Xenopus laevis (African clawed frog).